The following is a 663-amino-acid chain: Fructose-1,6-bisphosphatase class 3 1 (663 aa).

The protein belongs to the FBPase class 3 family. Mn(2+) serves as cofactor.

The enzyme catalyses beta-D-fructose 1,6-bisphosphate + H2O = beta-D-fructose 6-phosphate + phosphate. The protein operates within carbohydrate biosynthesis; gluconeogenesis. This chain is Fructose-1,6-bisphosphatase class 3 1, found in Clostridium beijerinckii (strain ATCC 51743 / NCIMB 8052) (Clostridium acetobutylicum).